A 310-amino-acid polypeptide reads, in one-letter code: MSKPRKPKGRPISGWLILDKPMDFGSTEAVSKLKWLYKAQKAGHAGTLDPLASGMLPIALGDATKTVPYVMDGRKIYEFTVSWGEERATDDLEGDVTQSSERRPTEQQIRDILPRYIGTISQVPPQFSAIKIAGERAYDLARDGEAVEIPSREVEIFRLTLLGCRDANTAHFEVECGKGTYVRALARDFGRELGCYGHISGLRRTFVAPFSEDAMVPLANLVALEAIEDMDERLAALDALLIDTCEALSALPHLVINDDQAHRLKMGNPILVRGRDAPIAESEAYATARGRLIAIGEIGQGEFRPKRVFA.

Asp-49 (nucleophile) is an active-site residue.

It belongs to the pseudouridine synthase TruB family. Type 1 subfamily.

It catalyses the reaction uridine(55) in tRNA = pseudouridine(55) in tRNA. Functionally, responsible for synthesis of pseudouridine from uracil-55 in the psi GC loop of transfer RNAs. This chain is tRNA pseudouridine synthase B, found in Rhizobium etli (strain ATCC 51251 / DSM 11541 / JCM 21823 / NBRC 15573 / CFN 42).